The following is a 716-amino-acid chain: Fatty acid oxidation complex subunit alpha (716 aa).

The interval Met1–Ala189 is enoyl-CoA hydratase/isomerase. Residue Asp296 participates in substrate binding. The interval Lys311–Ala716 is 3-hydroxyacyl-CoA dehydrogenase. Residues Met324, Asp343, Val400–Glu402, Lys407, and Ser429 contribute to the NAD(+) site. His450 serves as the catalytic For 3-hydroxyacyl-CoA dehydrogenase activity. Asn453 serves as a coordination point for NAD(+). Asn500 and Tyr660 together coordinate substrate.

In the N-terminal section; belongs to the enoyl-CoA hydratase/isomerase family. This sequence in the C-terminal section; belongs to the 3-hydroxyacyl-CoA dehydrogenase family. In terms of assembly, heterotetramer of two alpha chains (FadB) and two beta chains (FadA).

The catalysed reaction is a (3S)-3-hydroxyacyl-CoA + NAD(+) = a 3-oxoacyl-CoA + NADH + H(+). It catalyses the reaction a (3S)-3-hydroxyacyl-CoA = a (2E)-enoyl-CoA + H2O. It carries out the reaction a 4-saturated-(3S)-3-hydroxyacyl-CoA = a (3E)-enoyl-CoA + H2O. The enzyme catalyses (3S)-3-hydroxybutanoyl-CoA = (3R)-3-hydroxybutanoyl-CoA. The catalysed reaction is a (3Z)-enoyl-CoA = a 4-saturated (2E)-enoyl-CoA. It catalyses the reaction a (3E)-enoyl-CoA = a 4-saturated (2E)-enoyl-CoA. The protein operates within lipid metabolism; fatty acid beta-oxidation. In terms of biological role, involved in the aerobic and anaerobic degradation of long-chain fatty acids via beta-oxidation cycle. Catalyzes the formation of 3-oxoacyl-CoA from enoyl-CoA via L-3-hydroxyacyl-CoA. It can also use D-3-hydroxyacyl-CoA and cis-3-enoyl-CoA as substrate. In Shewanella baltica (strain OS195), this protein is Fatty acid oxidation complex subunit alpha.